The primary structure comprises 121 residues: Small ribosomal subunit protein uS13 (121 aa).

Residues G94 to K121 are disordered. The segment covering V109–K121 has biased composition (basic residues).

It belongs to the universal ribosomal protein uS13 family. Part of the 30S ribosomal subunit. Forms a loose heterodimer with protein S19. Forms two bridges to the 50S subunit in the 70S ribosome.

In terms of biological role, located at the top of the head of the 30S subunit, it contacts several helices of the 16S rRNA. In the 70S ribosome it contacts the 23S rRNA (bridge B1a) and protein L5 of the 50S subunit (bridge B1b), connecting the 2 subunits; these bridges are implicated in subunit movement. Contacts the tRNAs in the A and P-sites. In Onion yellows phytoplasma (strain OY-M), this protein is Small ribosomal subunit protein uS13.